The primary structure comprises 616 residues: Matrix metalloproteinase-21 (616 aa).

The first 22 residues, 1-22, serve as a signal peptide directing secretion; the sequence is MPTAPALGALLLLLGALTPGHQ. A propeptide spanning residues 23-192 is cleaved from the precursor; that stretch reads EKLFHSRDHS…TSTSKIRKKR (170 aa). Positions 139–146 match the Cysteine switch motif; that stretch reads PRCGVPDN. Residue Cys141 participates in Zn(2+) binding. Residues 157-186 form a disordered region; it reads SNSNNVTEKASGKSLNTTTNQNPENGTSTS. N-linked (GlcNAc...) asparagine glycosylation is found at Asn161, Asn172, and Asn181. His329 contacts Zn(2+). Glu330 is an active-site residue. Positions 333 and 339 each coordinate Zn(2+). Cys375 and Cys606 are oxidised to a cystine. Hemopexin repeat units lie at residues 376–435, 437–493, 494–542, and 549–605; these read EGSF…WHGI, AEGI…FPKI, PSPI…FPAV, and FGNI…WTDI. N-linked (GlcNAc...) asparagine glycosylation is present at Asn418. Asn597 carries N-linked (GlcNAc...) asparagine glycosylation.

This sequence belongs to the peptidase M10A family. It depends on Zn(2+) as a cofactor. Requires Ca(2+) as cofactor. Post-translationally, the precursor is cleaved by a furin endopeptidase.

It localises to the secreted. Its function is as follows. May play a role in gastrulation-related cell movement. Plays a specialized role in the generation of left-right asymmetry during embryogenesis. May act as a negative regulator of the NOTCH-signaling pathway. This Cynops pyrrhogaster (Japanese fire-bellied newt) protein is Matrix metalloproteinase-21 (MMP21).